The following is a 174-amino-acid chain: Adenylate kinase (174 aa).

Residues 12–41 (STGDMLRAAIKAGTPLGLEAKKIIDEGGLV) form an NMP region. Residues Thr13, Arg18, 39–41 (GLV), 67–70 (GFPR), and Gln74 each bind AMP. Positions 104-141 (GRRVHLASGRTYHVTYNPPKVEGKDDVTGEDLIQRDDD) are LID. Residues Arg105 and 114–115 (TY) each bind ATP. AMP-binding residues include Arg138 and Arg149.

This sequence belongs to the adenylate kinase family. Monomer.

Its subcellular location is the cytoplasm. The enzyme catalyses AMP + ATP = 2 ADP. It participates in purine metabolism; AMP biosynthesis via salvage pathway; AMP from ADP: step 1/1. Catalyzes the reversible transfer of the terminal phosphate group between ATP and AMP. Plays an important role in cellular energy homeostasis and in adenine nucleotide metabolism. In Neisseria cinerea, this protein is Adenylate kinase.